The following is a 296-amino-acid chain: Meiotically up-regulated gene 2 protein (296 aa).

This sequence belongs to the UPF0612 family.

The protein localises to the cytoplasm. It localises to the nucleus. Its function is as follows. Has a role in meiosis. The protein is Meiotically up-regulated gene 2 protein (mug2) of Schizosaccharomyces pombe (strain 972 / ATCC 24843) (Fission yeast).